The sequence spans 305 residues: Homeobox protein ceh-23 (305 aa).

Disordered regions lie at residues 113-140 (ASCP…ERRR) and 262-305 (RRSK…KVLN). Residues 120 to 135 (ASSQATVTLQVPSTGS) show a composition bias toward polar residues. Residues 211-270 (HRKARTIYGTTQTQQLEDMFKGQMYVVGAERENLAQRLGLSPSQVRIWFQNRRSKHRRKQ) constitute a DNA-binding region (homeobox). Residues 287–305 (GKDEEEDDEEDEDDVKVLN) show a composition bias toward acidic residues.

It belongs to the distal-less homeobox family.

The protein resides in the nucleus. In terms of biological role, probable transcription factor. Required for differentiation of AIY interneurons, acting downstream of LIM/homeobox protein ttx-3. Modulates gene expression, acting downstream of AMP kinase aak-2/AMPK signaling. Modulates lifespan. In Caenorhabditis elegans, this protein is Homeobox protein ceh-23 (ceh-23).